Reading from the N-terminus, the 389-residue chain is Na(+)/H(+) antiporter NhaA 1 (389 aa).

A run of 11 helical transmembrane segments spans residues 12-32, 62-82, 97-117, 128-148, 157-177, 184-204, 220-240, 260-280, 282-302, 331-351, and 365-385; these read VLNE…ALLV, FLLW…GLEL, IVLP…LFAL, GWAI…MMCG, IFLL…IAIF, IVAF…NILG, ISVL…AFFI, FWLA…VNLS, IDIG…LFVG, LYGV…IDGL, and LAIL…LKFF.

This sequence belongs to the NhaA Na(+)/H(+) (TC 2.A.33) antiporter family.

The protein localises to the cell inner membrane. The enzyme catalyses Na(+)(in) + 2 H(+)(out) = Na(+)(out) + 2 H(+)(in). Functionally, na(+)/H(+) antiporter that extrudes sodium in exchange for external protons. This is Na(+)/H(+) antiporter NhaA 1 from Campylobacter jejuni subsp. jejuni serotype O:6 (strain 81116 / NCTC 11828).